Reading from the N-terminus, the 77-residue chain is Acyl carrier protein (77 aa).

Residues 1–76 (MAVFDEVKDV…DVVNYIDGLK (76 aa)) form the Carrier domain. Residue Ser-36 is modified to O-(pantetheine 4'-phosphoryl)serine.

It belongs to the acyl carrier protein (ACP) family. In terms of processing, 4'-phosphopantetheine is transferred from CoA to a specific serine of apo-ACP by AcpS. This modification is essential for activity because fatty acids are bound in thioester linkage to the sulfhydryl of the prosthetic group.

It localises to the cytoplasm. It participates in lipid metabolism; fatty acid biosynthesis. Functionally, carrier of the growing fatty acid chain in fatty acid biosynthesis. The protein is Acyl carrier protein of Campylobacter fetus subsp. fetus (strain 82-40).